We begin with the raw amino-acid sequence, 877 residues long: Clumping factor B (877 aa).

Positions 1–44 are cleaved as a signal peptide; sequence MKKRIDYLSNKQNKYSIRRFTVGTTSVIVGATILFGIGNHQAQA. The YSIRK-G/S signaling motif motif lies at 15–26; sequence YSIRRFTVGTTS. Composition is skewed to polar residues over residues 44–61 and 68–95; these read ASEQ…NASA and MIET…NVDS. The disordered stretch occupies residues 44–192; it reads ASEQSNDTTQ…QGTSKPSVRT (149 aa). Residues 45–542 form a ligand binding A region region; that stretch reads SEQSNDTTQS…GSADGDSAVN (498 aa). The span at 96 to 119 shows a compositional bias: low complexity; sequence TTKPMSTQTSNTTTTEPASTNETP. Positions 120 to 189 are enriched in polar residues; it reads QPTAIKNQAT…SNAQGTSKPS (70 aa). The MIDAS-like motif motif lies at 272–276; that stretch reads DYSNS. The disordered stretch occupies residues 530–849; the sequence is YGGGSADGDS…ETGDKSENTN (320 aa). A compositionally biased stretch (pro residues) spans 545–555; that stretch reads DPTPGPPVDPE. Residues 556–801 show a composition bias toward acidic residues; it reads PSPDPEPEPT…SDSDSDSDSD (246 aa). Positions 805-816 are enriched in polar residues; that stretch reads RVTPPNNEQKAP. A compositionally biased stretch (basic and acidic residues) spans 833–846; that stretch reads HKTDALPETGDKSE. The short motif at 838-842 is the LPXTG sorting signal element; the sequence is LPETG. Threonine 841 is subject to Pentaglycyl murein peptidoglycan amidated threonine. A propeptide spans 842–877 (removed by sortase); the sequence is GDKSENTNATLFGAMMALLGSLLLFRKRKQDHKEKA.

It belongs to the serine-aspartate repeat-containing protein (SDr) family. In terms of processing, proteolytically cleaved by aureolysin (aur). This cleavage leads to the inactivation of ClfB.

The protein resides in the secreted. The protein localises to the cell wall. In terms of biological role, cell surface-associated protein implicated in virulence by promoting bacterial attachment to both alpha- and beta-chains of human fibrinogen and inducing the formation of bacterial clumps. The sequence is that of Clumping factor B (clfB) from Staphylococcus aureus (strain Mu50 / ATCC 700699).